Here is a 444-residue protein sequence, read N- to C-terminus: ATP-dependent protease ATPase subunit HslU (444 aa).

Residues Ile18 and 60-65 contribute to the ATP site; that span reads GVGKTE. The disordered stretch occupies residues 143–163; the sequence is WGEVESHDSHSSTRQAFRKKL. Asp257, Glu322, and Arg394 together coordinate ATP.

This sequence belongs to the ClpX chaperone family. HslU subfamily. A double ring-shaped homohexamer of HslV is capped on each side by a ring-shaped HslU homohexamer. The assembly of the HslU/HslV complex is dependent on binding of ATP.

Its subcellular location is the cytoplasm. In terms of biological role, ATPase subunit of a proteasome-like degradation complex; this subunit has chaperone activity. The binding of ATP and its subsequent hydrolysis by HslU are essential for unfolding of protein substrates subsequently hydrolyzed by HslV. HslU recognizes the N-terminal part of its protein substrates and unfolds these before they are guided to HslV for hydrolysis. This chain is ATP-dependent protease ATPase subunit HslU, found in Haemophilus influenzae (strain PittEE).